Reading from the N-terminus, the 829-residue chain is Probable beta-glucosidase H (829 aa).

Asp-225 is a catalytic residue. Residues 389–548 enclose the PA14 domain; it reads RMLSNAVIRF…DPEQMVRDAV (160 aa). Asn-416, Asn-431, Asn-473, Asn-602, and Asn-627 each carry an N-linked (GlcNAc...) asparagine glycan.

Belongs to the glycosyl hydrolase 3 family.

The protein localises to the secreted. It carries out the reaction Hydrolysis of terminal, non-reducing beta-D-glucosyl residues with release of beta-D-glucose.. It participates in glycan metabolism; cellulose degradation. Functionally, beta-glucosidases are one of a number of cellulolytic enzymes involved in the degradation of cellulosic biomass. Catalyzes the last step releasing glucose from the inhibitory cellobiose. The chain is Probable beta-glucosidase H (bglH) from Aspergillus clavatus (strain ATCC 1007 / CBS 513.65 / DSM 816 / NCTC 3887 / NRRL 1 / QM 1276 / 107).